Consider the following 231-residue polypeptide: Ribose-5-phosphate isomerase A (231 aa).

Substrate is bound by residues 40-43 (TGST), 93-96 (DGAD), and 106-109 (KGGG). The active-site Proton acceptor is Glu-115. Lys-133 serves as a coordination point for substrate.

The protein belongs to the ribose 5-phosphate isomerase family. Homodimer.

The enzyme catalyses aldehydo-D-ribose 5-phosphate = D-ribulose 5-phosphate. It functions in the pathway carbohydrate degradation; pentose phosphate pathway; D-ribose 5-phosphate from D-ribulose 5-phosphate (non-oxidative stage): step 1/1. Catalyzes the reversible conversion of ribose-5-phosphate to ribulose 5-phosphate. This is Ribose-5-phosphate isomerase A from Escherichia coli O6:K15:H31 (strain 536 / UPEC).